Reading from the N-terminus, the 161-residue chain is Putative HTH-type transcriptional regulator MT1325 (161 aa).

Positions 2 to 132 constitute an HTH rrf2-type domain; sequence RMSAKAEYAV…EETTLADVAG (131 aa).

The polypeptide is Putative HTH-type transcriptional regulator MT1325 (Mycobacterium tuberculosis (strain CDC 1551 / Oshkosh)).